A 287-amino-acid chain; its full sequence is Protease HtpX (287 aa).

2 consecutive transmembrane segments (helical) span residues 4–24 (VMLF…VLNI) and 36–56 (LSGL…ISLM). H143 serves as a coordination point for Zn(2+). Residue E144 is part of the active site. A Zn(2+)-binding site is contributed by H147. 2 helical membrane passes run 158–178 (LMQG…ANIV) and 192–212 (MVYF…ASFI). Zn(2+) is bound at residue E221.

The protein belongs to the peptidase M48B family. Zn(2+) serves as cofactor.

The protein localises to the cell inner membrane. This is Protease HtpX from Vibrio atlanticus (strain LGP32) (Vibrio splendidus (strain Mel32)).